Here is a 204-residue protein sequence, read N- to C-terminus: Small ribosomal subunit protein uS7 (204 aa).

The residue at position 1 (M1) is an N-acetylmethionine. At T2 the chain carries N-acetylthreonine; in 40S ribosomal protein S5, N-terminally processed. Position 14 is a phosphothreonine (T14). K47 carries the N6-acetyllysine; alternate modification. K47 is covalently cross-linked (Glycyl lysine isopeptide (Lys-Gly) (interchain with G-Cter in SUMO2); alternate). Position 142 is a phosphoserine (S142).

This sequence belongs to the universal ribosomal protein uS7 family. As to quaternary structure, component of the small ribosomal subunit. Part of the small subunit (SSU) processome, composed of more than 70 proteins and the RNA chaperone small nucleolar RNA (snoRNA) U3.

It is found in the cytoplasm. The protein localises to the nucleus. The protein resides in the nucleolus. Component of the small ribosomal subunit. The ribosome is a large ribonucleoprotein complex responsible for the synthesis of proteins in the cell. Part of the small subunit (SSU) processome, first precursor of the small eukaryotic ribosomal subunit. During the assembly of the SSU processome in the nucleolus, many ribosome biogenesis factors, an RNA chaperone and ribosomal proteins associate with the nascent pre-rRNA and work in concert to generate RNA folding, modifications, rearrangements and cleavage as well as targeted degradation of pre-ribosomal RNA by the RNA exosome. The polypeptide is Small ribosomal subunit protein uS7 (Rps5) (Mus musculus (Mouse)).